Here is a 477-residue protein sequence, read N- to C-terminus: MSDLIAQSRAGDNAEPLSVSALSQMLKRTVEDRFGYVRLRGELSGVKRAASGHMYCSLKDEKAVIDGVMWKGTTARLAFQPEDGLEVIATGKLTTYPGRSKYQIVLESLEMAGEGALLALLEKTRQRLEAEGLFARDRKRPLPFLPRTIGVVTSPTGAVIRDILHRLADRFPSHVLVWPVLVQGQGAAEQVSAAIRGFGAIKAGGEVPRPDLLIVARGGGSIEDLWSFNEEMVVRAIADSPIPVISAVGHETDTTLADYAADRRAPTPTAAAEIAVPVKGELAATLNDYAARQQRGVLRPLSLGRERLEARVQRLPTIETLLQPQAQKLDERVERLRGALRDRAAKGREALATQRLSPTMLQRAEREARRKLDQVRLAPALVERRAARDGERLAGLSRVLATLNPRAPLERGYALVRDADGKLVRAKGEATKQARLAVEFADGSLDVVPAGKAAAAPKRVKKSPPPGTSGAQEDLFG.

Positions 452–477 are disordered; sequence KAAAAPKRVKKSPPPGTSGAQEDLFG.

It belongs to the XseA family. In terms of assembly, heterooligomer composed of large and small subunits.

It is found in the cytoplasm. The enzyme catalyses Exonucleolytic cleavage in either 5'- to 3'- or 3'- to 5'-direction to yield nucleoside 5'-phosphates.. Functionally, bidirectionally degrades single-stranded DNA into large acid-insoluble oligonucleotides, which are then degraded further into small acid-soluble oligonucleotides. The polypeptide is Exodeoxyribonuclease 7 large subunit (Erythrobacter litoralis (strain HTCC2594)).